The chain runs to 357 residues: Uroporphyrinogen decarboxylase (357 aa).

Residues 27–31 (RQAGR), Asp-77, Tyr-154, Thr-209, and His-327 contribute to the substrate site.

The protein belongs to the uroporphyrinogen decarboxylase family. Homodimer.

It is found in the cytoplasm. It catalyses the reaction uroporphyrinogen III + 4 H(+) = coproporphyrinogen III + 4 CO2. The protein operates within porphyrin-containing compound metabolism; protoporphyrin-IX biosynthesis; coproporphyrinogen-III from 5-aminolevulinate: step 4/4. Catalyzes the decarboxylation of four acetate groups of uroporphyrinogen-III to yield coproporphyrinogen-III. This is Uroporphyrinogen decarboxylase from Nitrosococcus oceani (strain ATCC 19707 / BCRC 17464 / JCM 30415 / NCIMB 11848 / C-107).